The following is a 205-amino-acid chain: Small ribosomal subunit protein uS4 (205 aa).

In terms of domain architecture, S4 RNA-binding spans 95-163 (RRLDNVVYRL…FKENLESRDP (69 aa)).

The protein belongs to the universal ribosomal protein uS4 family. As to quaternary structure, part of the 30S ribosomal subunit. Contacts protein S5. The interaction surface between S4 and S5 is involved in control of translational fidelity.

One of the primary rRNA binding proteins, it binds directly to 16S rRNA where it nucleates assembly of the body of the 30S subunit. Functionally, with S5 and S12 plays an important role in translational accuracy. This is Small ribosomal subunit protein uS4 from Persephonella marina (strain DSM 14350 / EX-H1).